Here is a 107-residue protein sequence, read N- to C-terminus: Phosphoribosyl-ATP pyrophosphatase (107 aa).

The protein belongs to the PRA-PH family.

It localises to the cytoplasm. It catalyses the reaction 1-(5-phospho-beta-D-ribosyl)-ATP + H2O = 1-(5-phospho-beta-D-ribosyl)-5'-AMP + diphosphate + H(+). Its pathway is amino-acid biosynthesis; L-histidine biosynthesis; L-histidine from 5-phospho-alpha-D-ribose 1-diphosphate: step 2/9. The chain is Phosphoribosyl-ATP pyrophosphatase from Bacillus cytotoxicus (strain DSM 22905 / CIP 110041 / 391-98 / NVH 391-98).